We begin with the raw amino-acid sequence, 349 residues long: Isopentenyl-diphosphate delta-isomerase (349 aa).

Residue 9–10 coordinates substrate; sequence RK. FMN contacts are provided by residues 65-67, Ser-95, and Asn-124; that span reads AMT. A substrate-binding site is contributed by 95–97; the sequence is STH. Gln-154 is a binding site for substrate. Mg(2+) is bound at residue Glu-155. Residues Lys-186, Ser-211, Thr-216, 262 to 264, and 283 to 284 contribute to the FMN site; these read GLR and SR.

It belongs to the IPP isomerase type 2 family. Homooctamer. Dimer of tetramers. FMN is required as a cofactor. It depends on NADPH as a cofactor. The cofactor is Mg(2+).

It localises to the cytoplasm. It carries out the reaction isopentenyl diphosphate = dimethylallyl diphosphate. Involved in the biosynthesis of isoprenoids. Catalyzes the 1,3-allylic rearrangement of the homoallylic substrate isopentenyl (IPP) to its allylic isomer, dimethylallyl diphosphate (DMAPP). This Staphylococcus epidermidis (strain ATCC 35984 / DSM 28319 / BCRC 17069 / CCUG 31568 / BM 3577 / RP62A) protein is Isopentenyl-diphosphate delta-isomerase.